We begin with the raw amino-acid sequence, 278 residues long: HTH-type transcriptional activator RhaS (278 aa).

Positions 174 to 272 (NLLLAWLEDH…NWSPRDIRQG (99 aa)) constitute an HTH araC/xylS-type domain. 2 DNA-binding regions (H-T-H motif) span residues 191–212 (DAVAEQFSLSLRTLHRQLKQQT) and 239–262 (VTDIAYRCGFSDSNHFSTLFRREF).

In terms of assembly, binds DNA as a dimer.

Its subcellular location is the cytoplasm. Activates expression of the rhaBAD and rhaT operons. This Escherichia coli O139:H28 (strain E24377A / ETEC) protein is HTH-type transcriptional activator RhaS.